The chain runs to 407 residues: Magnesium-protoporphyrin IX monomethyl ester [oxidative] cyclase 1, chloroplastic (407 aa).

Over residues 1 to 10 (MQTTLKQQRA) the composition is skewed to polar residues. Residues 1–28 (MQTTLKQQRASGRVSARQPFRSAAVARP) are disordered.

The protein belongs to the AcsF family. Requires Fe cation as cofactor.

It localises to the plastid. The protein resides in the chloroplast thylakoid membrane. It catalyses the reaction Mg-protoporphyrin IX 13-monomethyl ester + 3 NADPH + 3 O2 + 2 H(+) = 3,8-divinyl protochlorophyllide a + 3 NADP(+) + 5 H2O. It participates in porphyrin-containing compound metabolism; chlorophyll biosynthesis. Catalyzes the formation of the isocyclic ring in chlorophyll biosynthesis under oxygen- and copper-deficient conditions. Mediates the cyclase reaction, which results in the formation of divinylprotochlorophyllide (Pchlide) characteristic of all chlorophylls from magnesium-protoporphyrin IX 13-monomethyl ester (MgPMME). This is Magnesium-protoporphyrin IX monomethyl ester [oxidative] cyclase 1, chloroplastic (CRD1) from Chlamydomonas reinhardtii (Chlamydomonas smithii).